A 394-amino-acid chain; its full sequence is Elongation factor Tu (394 aa).

Residues 10–204 form the tr-type G domain; it reads RTHINVGTIG…ILDNYIPEPK (195 aa). Residues 19–26 form a G1 region; that stretch reads GHVDHGKT. 19–26 is a GTP binding site; sequence GHVDHGKT. T26 contributes to the Mg(2+) binding site. Positions 60–64 are G2; sequence GITIN. The segment at 81 to 84 is G3; sequence DCPG. GTP contacts are provided by residues 81-85 and 136-139; these read DCPGH and NKCD. The interval 136-139 is G4; it reads NKCD. The segment at 174 to 176 is G5; it reads SAL.

This sequence belongs to the TRAFAC class translation factor GTPase superfamily. Classic translation factor GTPase family. EF-Tu/EF-1A subfamily. Monomer.

The protein resides in the cytoplasm. It catalyses the reaction GTP + H2O = GDP + phosphate + H(+). GTP hydrolase that promotes the GTP-dependent binding of aminoacyl-tRNA to the A-site of ribosomes during protein biosynthesis. In Blochmanniella floridana, this protein is Elongation factor Tu.